Consider the following 305-residue polypeptide: Protoheme IX farnesyltransferase (305 aa).

9 consecutive transmembrane segments (helical) span residues 29–49, 55–75, 101–121, 123–143, 151–171, 177–197, 219–241, 246–268, and 283–303; these read LIVFCAAIGMLLAVPGAPGLA, LWATLGIWLVASAAAAFNCLI, ALIFSAVLCSAGMAVLHEAVN, LTAWLTLGTFVGYAVIYTVVL, IVIGGISGAMPPLLGWAAMTG, GLILCLIIFLWTPPHFWALAL, FTRLQILLYTFVLLAGTLLPFVQ, WLYLAAAFVLGLRFIHYAWRLWR, and IWHLSLLFAALLVDHYTQDLL.

Belongs to the UbiA prenyltransferase family. Protoheme IX farnesyltransferase subfamily.

The protein resides in the cell inner membrane. It carries out the reaction heme b + (2E,6E)-farnesyl diphosphate + H2O = Fe(II)-heme o + diphosphate. Its pathway is porphyrin-containing compound metabolism; heme O biosynthesis; heme O from protoheme: step 1/1. In terms of biological role, converts heme B (protoheme IX) to heme O by substitution of the vinyl group on carbon 2 of heme B porphyrin ring with a hydroxyethyl farnesyl side group. The polypeptide is Protoheme IX farnesyltransferase (Leptothrix cholodnii (strain ATCC 51168 / LMG 8142 / SP-6) (Leptothrix discophora (strain SP-6))).